A 309-amino-acid chain; its full sequence is Methionyl-tRNA formyltransferase (309 aa).

109–112 (SLLP) contributes to the (6S)-5,6,7,8-tetrahydrofolate binding site.

The protein belongs to the Fmt family.

The enzyme catalyses L-methionyl-tRNA(fMet) + (6R)-10-formyltetrahydrofolate = N-formyl-L-methionyl-tRNA(fMet) + (6S)-5,6,7,8-tetrahydrofolate + H(+). Attaches a formyl group to the free amino group of methionyl-tRNA(fMet). The formyl group appears to play a dual role in the initiator identity of N-formylmethionyl-tRNA by promoting its recognition by IF2 and preventing the misappropriation of this tRNA by the elongation apparatus. In Chloroflexus aggregans (strain MD-66 / DSM 9485), this protein is Methionyl-tRNA formyltransferase.